Reading from the N-terminus, the 662-residue chain is ABC transporter G family member 17 (662 aa).

The region spanning 22-276 is the ABC transporter domain; it reads LAFNDLTYNV…FSEFGSPIPE (255 aa). Residue 69 to 76 participates in ATP binding; it reads GASGAGKS. One can recognise an ABC transmembrane type-2 domain in the interval 356–566; that stretch reads VETVILAKRY…PYEAVLHNEF (211 aa). 6 consecutive transmembrane segments (helical) span residues 375 to 395, 410 to 430, 451 to 471, 486 to 508, 514 to 536, and 635 to 655; these read LIGTRVFIVMMTGFLLATVYW, FFSFAMATMFYSCADGLPAFI, VISHSLVTLPHLFALSIGFAA, FIYYLMIIFASFWSGCSFVTFVS, VMMSYMVTFGYLSYCLLFSGFYV, and LWVTLAWGFFFRILFYFSLLL.

The protein belongs to the ABC transporter superfamily. ABCG family. Eye pigment precursor importer (TC 3.A.1.204) subfamily.

The protein localises to the membrane. This is ABC transporter G family member 17 (ABCG17) from Arabidopsis thaliana (Mouse-ear cress).